The sequence spans 238 residues: tRNA (guanine-N(7)-)-methyltransferase (238 aa).

Glutamate 70, aspartate 95, aspartate 122, and aspartate 145 together coordinate S-adenosyl-L-methionine. Aspartate 145 is a catalytic residue. Residues lysine 149, aspartate 181, and threonine 216 to glutamate 219 contribute to the substrate site.

The protein belongs to the class I-like SAM-binding methyltransferase superfamily. TrmB family.

It carries out the reaction guanosine(46) in tRNA + S-adenosyl-L-methionine = N(7)-methylguanosine(46) in tRNA + S-adenosyl-L-homocysteine. It participates in tRNA modification; N(7)-methylguanine-tRNA biosynthesis. In terms of biological role, catalyzes the formation of N(7)-methylguanine at position 46 (m7G46) in tRNA. In Neisseria gonorrhoeae (strain ATCC 700825 / FA 1090), this protein is tRNA (guanine-N(7)-)-methyltransferase.